Reading from the N-terminus, the 756-residue chain is 1,4-alpha-glucan branching enzyme GlgB (756 aa).

Residue Asp-425 is the Nucleophile of the active site. Glu-478 (proton donor) is an active-site residue.

The protein belongs to the glycosyl hydrolase 13 family. GlgB subfamily. As to quaternary structure, monomer.

The enzyme catalyses Transfers a segment of a (1-&gt;4)-alpha-D-glucan chain to a primary hydroxy group in a similar glucan chain.. The protein operates within glycan biosynthesis; glycogen biosynthesis. Functionally, catalyzes the formation of the alpha-1,6-glucosidic linkages in glycogen by scission of a 1,4-alpha-linked oligosaccharide from growing alpha-1,4-glucan chains and the subsequent attachment of the oligosaccharide to the alpha-1,6 position. The chain is 1,4-alpha-glucan branching enzyme GlgB from Cupriavidus necator (strain ATCC 17699 / DSM 428 / KCTC 22496 / NCIMB 10442 / H16 / Stanier 337) (Ralstonia eutropha).